A 189-amino-acid polypeptide reads, in one-letter code: Guanylate kinase (189 aa).

A Guanylate kinase-like domain is found at 8–186; the sequence is GKLTVITGPS…AVIELESLMG (179 aa). 15–22 is an ATP binding site; sequence GPSGVGKG.

Belongs to the guanylate kinase family.

It localises to the cytoplasm. It carries out the reaction GMP + ATP = GDP + ADP. In terms of biological role, essential for recycling GMP and indirectly, cGMP. This chain is Guanylate kinase, found in Prochlorococcus marinus (strain MIT 9313).